The following is a 572-amino-acid chain: Fatty acid amide hydrolase 1 (572 aa).

The N-terminal stretch at 1–14 is a signal peptide; the sequence is MIFYLVLLVLGAIA. Residues 32–63 are a coiled coil; that stretch reads IVAQRRRDDLSKNVEQARKAADKLDTQRRDWI. Residues lysine 139 and serine 214 each act as charge relay system in the active site. Residues serine 214 and 235-238 each bind substrate; that span reads VGGS. Serine 238 serves as the catalytic Acyl-ester intermediate.

Belongs to the amidase family. In terms of tissue distribution, expressed in the pharynx, some pharyngeal neurons, the posterior intestine and anal depressor muscles.

The enzyme catalyses N-(5Z,8Z,11Z,14Z-eicosatetraenoyl)-ethanolamine + H2O = ethanolamine + (5Z,8Z,11Z,14Z)-eicosatetraenoate. It catalyses the reaction (9Z)-octadecenamide + H2O = (9Z)-octadecenoate + NH4(+). The catalysed reaction is (5Z,8Z,11Z,14Z,17Z-eicosapentaenoyl) ethanolamine + H2O = (5Z,8Z,11Z,14Z,17Z)-eicosapentaenoate + ethanolamine. It carries out the reaction N-(9Z-hexadecenoyl) ethanolamine + H2O = (9Z)-hexadecenoate + ethanolamine. The enzyme catalyses N-(9Z-octadecenoyl) ethanolamine + H2O = ethanolamine + (9Z)-octadecenoate. It catalyses the reaction N-octadecanoyl ethanolamine + H2O = octadecanoate + ethanolamine. The catalysed reaction is N-docosanoyl-ethanolamine + H2O = docosanoate + ethanolamine. It carries out the reaction N-(15Z-tetracosenoyl)-ethanolamine + H2O = (15Z)-tetracosenoate + ethanolamine. The enzyme catalyses N-hexadecanoylethanolamine + H2O = ethanolamine + hexadecanoate. It catalyses the reaction N-(9Z,12Z-octadecadienoyl)-ethanolamine + H2O = ethanolamine + (9Z,12Z)-octadecadienoate. The catalysed reaction is (9Z)-octadecenoate + glycine = N-(9Z-octadecenoyl)glycine + H2O. It carries out the reaction N-(5Z,8Z,11Z,14Z)-eicosatetraenoyl-glycine + H2O = (5Z,8Z,11Z,14Z)-eicosatetraenoate + glycine. The enzyme catalyses N-(5Z,8Z,11Z,14Z-eicosatetraenoyl)-L-serine + H2O = (5Z,8Z,11Z,14Z)-eicosatetraenoate + L-serine. Functionally, catalyzes the hydrolysis of endogenous amidated lipids like anandamide (AEA or N-(5Z,8Z,11Z,14Z-eicosatetraenoyl)-ethanolamine) and eicosapentaneoyl ethanolamide (EPEA or (5Z,8Z,11Z,14Z,17Z-eicosapentaenoyl) ethanolamine), as well as other fatty amides, to their corresponding fatty acids, thereby regulating the signaling functions of these molecules. EPEA promotes dauer formation and may constitute a signal of high nutrient availability. Breakdown of EPEA may promote lifespan extension when nutrient availability is high. Facilitates axon regeneration after injury by degradating inhibitory compounds such as AEA. FAAH cooperates with PM20D1 in the hydrolysis of amino acid-conjugated fatty acids such as N-fatty acyl glycine and N-fatty acyl-L-serine, thereby acting as a physiological regulator of specific subsets of intracellular, but not of extracellular, N-fatty acyl amino acids. The sequence is that of Fatty acid amide hydrolase 1 from Caenorhabditis elegans.